Reading from the N-terminus, the 178-residue chain is Ribosome maturation factor RimP (178 aa).

The protein belongs to the RimP family.

The protein localises to the cytoplasm. Required for maturation of 30S ribosomal subunits. The sequence is that of Ribosome maturation factor RimP from Mycobacterium avium (strain 104).